A 328-amino-acid polypeptide reads, in one-letter code: Thiamine-monophosphate kinase (328 aa).

Mg(2+) is bound by residues D30, T45, T46, and D47. Residue H54 participates in substrate binding. Positions 75 and 122 each coordinate Mg(2+). Residues 121–122 and R146 contribute to the ATP site; that span reads GD. D211 serves as a coordination point for Mg(2+). S213 is an ATP binding site. Residue D214 coordinates Mg(2+). Residues E262 and F321 each contribute to the substrate site.

Belongs to the thiamine-monophosphate kinase family.

It catalyses the reaction thiamine phosphate + ATP = thiamine diphosphate + ADP. It functions in the pathway cofactor biosynthesis; thiamine diphosphate biosynthesis; thiamine diphosphate from thiamine phosphate: step 1/1. Its function is as follows. Catalyzes the ATP-dependent phosphorylation of thiamine-monophosphate (TMP) to form thiamine-pyrophosphate (TPP), the active form of vitamin B1. This is Thiamine-monophosphate kinase from Haemophilus influenzae (strain ATCC 51907 / DSM 11121 / KW20 / Rd).